Consider the following 298-residue polypeptide: Protoheme IX farnesyltransferase (298 aa).

8 consecutive transmembrane segments (helical) span residues 26-46 (IVIL…GGPP), 48-68 (LGLT…ANAI), 110-130 (FLVL…GLLF), 147-167 (IVIG…AVTG), 174-194 (VIMF…LALF), 220-240 (ILLY…TGTV), 243-263 (LYLW…VGLL), and 276-296 (TYGW…LDVT).

The protein belongs to the UbiA prenyltransferase family. Protoheme IX farnesyltransferase subfamily. In terms of assembly, interacts with CtaA.

The protein localises to the cell membrane. The catalysed reaction is heme b + (2E,6E)-farnesyl diphosphate + H2O = Fe(II)-heme o + diphosphate. It participates in porphyrin-containing compound metabolism; heme O biosynthesis; heme O from protoheme: step 1/1. Its function is as follows. Converts heme B (protoheme IX) to heme O by substitution of the vinyl group on carbon 2 of heme B porphyrin ring with a hydroxyethyl farnesyl side group. The sequence is that of Protoheme IX farnesyltransferase from Symbiobacterium thermophilum (strain DSM 24528 / JCM 14929 / IAM 14863 / T).